The sequence spans 586 residues: Protein HOL1 (586 aa).

Over 1–66 the chain is Extracellular; that stretch reads MDKYTNRDHP…NWSSWRKLAH (66 aa). A helical transmembrane segment spans residues 67-87; that stretch reads FGLMAFITAFTAATSNDAGAA. Residues 88–103 are Cytoplasmic-facing; that stretch reads QDSLNEIYGISYDSMN. The chain crosses the membrane as a helical span at residues 104–124; the sequence is TGAGVLFLGIGWSTLFLAPFA. Residues 125-130 lie on the Extracellular side of the membrane; that stretch reads NLYGRK. Residues 131–151 form a helical membrane-spanning segment; the sequence is ITYIVCTTLGLFGALWFALAK. Residues 152-189 are Cytoplasmic-facing; it reads RTSDTIWSQLFVGISESCAEAQVQLSLSDIFFQHQLGS. Residues 190–210 form a helical membrane-spanning segment; sequence VLTVYIMCTSIGTFLGPLIAG. At 211-219 the chain is on the extracellular side; the sequence is YISAFTNFR. Residues 220–240 traverse the membrane as a helical segment; that stretch reads WVGWVAVIISGGLLITIIFGC. Over 241-362 the chain is Cytoplasmic; sequence EETYFDRGQY…YFKYLKINLR (122 aa). The chain crosses the membrane as a helical span at residues 363–383; sequence MFLFPPVWLSGMFWGIQDVFL. Topologically, residues 384-413 are extracellular; that stretch reads TFYLTTQESAYYEPPWNYSDFGVAIMNVPT. The helical transmembrane segment at 414 to 434 threads the bilayer; the sequence is LIGAVIGCICAGIVSDYFVLW. Topologically, residues 435–448 are cytoplasmic; sequence MARHNRGILEAEFR. The chain crosses the membrane as a helical span at residues 449 to 469; that stretch reads LYFSIATAIIGPAGLLMFGIG. Over 470-477 the chain is Extracellular; that stretch reads TARQWPWQ. The chain crosses the membrane as a helical span at residues 478 to 498; it reads AIYVGLGFVGFAWGCSGDIAM. The Cytoplasmic portion of the chain corresponds to 499–508; it reads AYLMDCYPDM. A helical transmembrane segment spans residues 509–529; it reads VLEGMVCTAIINNTISCIFTF. The Extracellular segment spans residues 530–544; the sequence is TCSDWLAASGTENTY. A helical membrane pass occupies residues 545 to 565; it reads IALAVINFGITAFALPMYYYG. Topologically, residues 566–586 are cytoplasmic; the sequence is KRIRLWTKRWYLQSVNLRDGV.

The protein localises to the membrane. In terms of biological role, seems to be involved in the uptake of several cations and of histidinol. This Saccharomyces cerevisiae (strain ATCC 204508 / S288c) (Baker's yeast) protein is Protein HOL1 (HOL1).